Consider the following 498-residue polypeptide: ATP synthase subunit beta, chloroplastic (498 aa).

Position 172–179 (172–179) interacts with ATP; that stretch reads GGAGVGKT.

Belongs to the ATPase alpha/beta chains family. In terms of assembly, F-type ATPases have 2 components, CF(1) - the catalytic core - and CF(0) - the membrane proton channel. CF(1) has five subunits: alpha(3), beta(3), gamma(1), delta(1), epsilon(1). CF(0) has four main subunits: a(1), b(1), b'(1) and c(9-12).

Its subcellular location is the plastid. It is found in the chloroplast thylakoid membrane. It carries out the reaction ATP + H2O + 4 H(+)(in) = ADP + phosphate + 5 H(+)(out). Its function is as follows. Produces ATP from ADP in the presence of a proton gradient across the membrane. The catalytic sites are hosted primarily by the beta subunits. This is ATP synthase subunit beta, chloroplastic from Pelargonium hortorum (Common geranium).